The following is a 331-amino-acid chain: Adenosine deaminase (331 aa).

Positions 12 and 14 each coordinate Zn(2+). Substrate contacts are provided by His14 and Asp16. His197 provides a ligand contact to Zn(2+). Residue Glu200 is the Proton donor of the active site. Asp278 lines the Zn(2+) pocket.

This sequence belongs to the metallo-dependent hydrolases superfamily. Adenosine and AMP deaminases family. Adenosine deaminase subfamily. Requires Zn(2+) as cofactor.

The enzyme catalyses adenosine + H2O + H(+) = inosine + NH4(+). It catalyses the reaction 2'-deoxyadenosine + H2O + H(+) = 2'-deoxyinosine + NH4(+). In terms of biological role, catalyzes the hydrolytic deamination of adenosine and 2-deoxyadenosine. The protein is Adenosine deaminase of Shewanella pealeana (strain ATCC 700345 / ANG-SQ1).